The sequence spans 63 residues: Glutamine synthetase translation inhibitor (63 aa).

Functionally, inhibits the synthesis of glutamine synthetase II. The chain is Glutamine synthetase translation inhibitor (gstI) from Rhizobium leguminosarum.